Here is a 445-residue protein sequence, read N- to C-terminus: tRNA-2-methylthio-N(6)-dimethylallyladenosine synthase (445 aa).

The MTTase N-terminal domain maps to 7–121 (KTFYIETFGC…LPEMLVQLEA (115 aa)). [4Fe-4S] cluster-binding residues include Cys16, Cys52, Cys84, Cys158, Cys162, and Cys165. A Radical SAM core domain is found at 144-374 (RDNPHRAYLT…QEKQRAIQIR (231 aa)). The region spanning 377-443 (AEMIGSIQEV…PNSLVGESAA (67 aa)) is the TRAM domain.

This sequence belongs to the methylthiotransferase family. MiaB subfamily. In terms of assembly, monomer. Requires [4Fe-4S] cluster as cofactor.

The protein resides in the cytoplasm. It catalyses the reaction N(6)-dimethylallyladenosine(37) in tRNA + (sulfur carrier)-SH + AH2 + 2 S-adenosyl-L-methionine = 2-methylsulfanyl-N(6)-dimethylallyladenosine(37) in tRNA + (sulfur carrier)-H + 5'-deoxyadenosine + L-methionine + A + S-adenosyl-L-homocysteine + 2 H(+). Catalyzes the methylthiolation of N6-(dimethylallyl)adenosine (i(6)A), leading to the formation of 2-methylthio-N6-(dimethylallyl)adenosine (ms(2)i(6)A) at position 37 in tRNAs that read codons beginning with uridine. This Solibacter usitatus (strain Ellin6076) protein is tRNA-2-methylthio-N(6)-dimethylallyladenosine synthase.